We begin with the raw amino-acid sequence, 881 residues long: Translation initiation factor IF-2 (881 aa).

2 disordered regions span residues 31–147 (KLAQ…TKVP) and 165–291 (SVVG…HYDE). The segment covering 42-55 (NSSEKPSAKVAEKV) has biased composition (basic and acidic residues). The span at 68 to 77 (ATPESVSSET) shows a compositional bias: polar residues. Residues 114–128 (VEEEIASSTDSEPEV) are compositionally biased toward acidic residues. Residues 191–203 (PKKEDKPAPKERS) are compositionally biased toward basic and acidic residues. A compositionally biased stretch (polar residues) spans 204–233 (GQAQAKPQQSSEASSENKPHSPNNNRSSQP). Over residues 235–267 (YRRDTSKKPGSDFRDRAKKDDNPKAFTGRDRYG) the composition is skewed to basic and acidic residues. Over residues 278 to 287 (RKKRVQKTKK) the composition is skewed to basic residues. The tr-type G domain maps to 387 to 556 (IRPPIVAFMG…ALQAEVLELK (170 aa)). Positions 396-403 (GHVDHGKT) are G1. 396 to 403 (GHVDHGKT) is a GTP binding site. A G2 region spans residues 421 to 425 (AITQH). The interval 442-445 (DTPG) is G3. GTP is bound by residues 442–446 (DTPGH) and 496–499 (NKCD). Positions 496 to 499 (NKCD) are G4. A G5 region spans residues 532–534 (SAK).

The protein belongs to the TRAFAC class translation factor GTPase superfamily. Classic translation factor GTPase family. IF-2 subfamily.

It is found in the cytoplasm. One of the essential components for the initiation of protein synthesis. Protects formylmethionyl-tRNA from spontaneous hydrolysis and promotes its binding to the 30S ribosomal subunits. Also involved in the hydrolysis of GTP during the formation of the 70S ribosomal complex. The sequence is that of Translation initiation factor IF-2 from Chlamydia felis (strain Fe/C-56) (Chlamydophila felis).